Here is a 681-residue protein sequence, read N- to C-terminus: MQKGNIGVTTENIFPIIKKFLYSDHEIFLRELVSNAVDATQKLNTLASISEFKGELGDLTVHVSLGKDTITISDRGIGLTAEEIDKYINQIAFSGANDFLEKYKNDANAIIGHFGLGFYSAFMVSKKVEIITKSYKEGAQAVKWTCDGSPEFTLEEVEKADRGTDIVLYIDDDCKEFLEESRISALLKKYCSFLPVPIAFGKKKEWKDGKQVETAEDNVINDTIPLWTKKPSELSDEDYKKFYRELYPMSDEPLFWIHLNVDYPFHLTGILYFPKVKSNIDLNKNKIQLYCNQVYVTDSVEGIVPDFLTLLHGVLDSPDIPLNVSRSYLQSDSNVKKISTYISKKVSDRLQSIFKNDRAQFEEKWNDLKIFINYGMLTQEDFYDKAQKFALFTDTDGKHYTFEEYQTLIKDNQTDKDKNLIYLYANNKDEQFAYIEAAKNKGYNVLLMDGQLDVAMVSMLEQKLEKSRFTRVDSDVVDNLIVKEDKKSDVLEASKQEALSAAFKSQLPKMEKVEFNVMTQALGENGSPVMITQSEYMRRMKEMANIQAGMSFYGEMPDMFNLVLNSDHKLVKEVLADEEKECSAAIAPIQTELEDVTKRRDALKKKQEGKKDEDIPTAEKDELNDLDKKWDELKQQKDSIFAGYAGKNKVVRQLIDLALLQNNMLKGEALNNFVKRSIELI.

An a; substrate-binding region spans residues 1–326 (MQKGNIGVTT…SPDIPLNVSR (326 aa)). A b region spans residues 327 to 545 (SYLQSDSNVK…YMRRMKEMAN (219 aa)). The tract at residues 546 to 681 (IQAGMSFYGE…NFVKRSIELI (136 aa)) is c. Positions 601–620 (DALKKKQEGKKDEDIPTAEK) are disordered.

Belongs to the heat shock protein 90 family. In terms of assembly, homodimer.

Its subcellular location is the cytoplasm. In terms of biological role, molecular chaperone. Has ATPase activity. This Bacteroides fragilis (strain ATCC 25285 / DSM 2151 / CCUG 4856 / JCM 11019 / LMG 10263 / NCTC 9343 / Onslow / VPI 2553 / EN-2) protein is Chaperone protein HtpG.